The chain runs to 500 residues: Protein nucleotidyltransferase YdiU (500 aa).

ATP-binding residues include Gly96, Gly98, Arg99, Lys119, Asp131, Gly132, Arg182, and Arg189. Asp258 acts as the Proton acceptor in catalysis. Positions 259 and 268 each coordinate Mg(2+). Asp268 contacts ATP.

Belongs to the SELO family. Requires Mg(2+) as cofactor. Mn(2+) is required as a cofactor.

The enzyme catalyses L-seryl-[protein] + ATP = 3-O-(5'-adenylyl)-L-seryl-[protein] + diphosphate. It catalyses the reaction L-threonyl-[protein] + ATP = 3-O-(5'-adenylyl)-L-threonyl-[protein] + diphosphate. It carries out the reaction L-tyrosyl-[protein] + ATP = O-(5'-adenylyl)-L-tyrosyl-[protein] + diphosphate. The catalysed reaction is L-histidyl-[protein] + UTP = N(tele)-(5'-uridylyl)-L-histidyl-[protein] + diphosphate. The enzyme catalyses L-seryl-[protein] + UTP = O-(5'-uridylyl)-L-seryl-[protein] + diphosphate. It catalyses the reaction L-tyrosyl-[protein] + UTP = O-(5'-uridylyl)-L-tyrosyl-[protein] + diphosphate. Functionally, nucleotidyltransferase involved in the post-translational modification of proteins. It can catalyze the addition of adenosine monophosphate (AMP) or uridine monophosphate (UMP) to a protein, resulting in modifications known as AMPylation and UMPylation. The protein is Protein nucleotidyltransferase YdiU of Rhizobium etli (strain ATCC 51251 / DSM 11541 / JCM 21823 / NBRC 15573 / CFN 42).